The chain runs to 480 residues: GTPase Der (480 aa).

EngA-type G domains follow at residues 5–170 and 178–351; these read PVVA…PSQE and LKLA…QSSM. GTP-binding positions include 11–18, 58–62, 123–126, 184–191, 231–235, and 296–299; these read GRPNVGKS, DTGGI, NKVD, DTAGV, and NKWD. Residues 352–436 enclose the KH-like domain; the sequence is FEVSTNRLTQ…PLNVVFKLNE (85 aa). The span at 438–454 shows a compositional bias: polar residues; the sequence is PYANKSDTPTKAKTQQL. Residues 438–480 form a disordered region; sequence PYANKSDTPTKAKTQQLRQRERNRAQKFTTKDKPRFTNKDKKR. Residues 455-480 are compositionally biased toward basic and acidic residues; it reads RQRERNRAQKFTTKDKPRFTNKDKKR.

The protein belongs to the TRAFAC class TrmE-Era-EngA-EngB-Septin-like GTPase superfamily. EngA (Der) GTPase family. In terms of assembly, associates with the 50S ribosomal subunit.

Its function is as follows. GTPase that plays an essential role in the late steps of ribosome biogenesis. In Psychrobacter cryohalolentis (strain ATCC BAA-1226 / DSM 17306 / VKM B-2378 / K5), this protein is GTPase Der.